The following is a 445-amino-acid chain: Argininosuccinate synthase (445 aa).

Residues 17 to 25 (AFSGGLDTS) and Ala43 contribute to the ATP site. Tyr99 contributes to the L-citrulline binding site. Residues Gly129 and Thr131 each coordinate ATP. L-aspartate-binding residues include Thr131, Asn135, and Asp136. Residue Asn135 participates in L-citrulline binding. Asp136 contacts ATP. Positions 139 and 192 each coordinate L-citrulline. Residue Asp194 participates in ATP binding. Thr201, Glu203, and Glu280 together coordinate L-citrulline.

The protein belongs to the argininosuccinate synthase family. Type 2 subfamily. In terms of assembly, homotetramer.

Its subcellular location is the cytoplasm. The enzyme catalyses L-citrulline + L-aspartate + ATP = 2-(N(omega)-L-arginino)succinate + AMP + diphosphate + H(+). It participates in amino-acid biosynthesis; L-arginine biosynthesis; L-arginine from L-ornithine and carbamoyl phosphate: step 2/3. The protein is Argininosuccinate synthase (argG) of Burkholderia multivorans (strain ATCC 17616 / 249).